We begin with the raw amino-acid sequence, 258 residues long: Imidazole glycerol phosphate synthase subunit HisF (258 aa).

Residues Asp-12 and Asp-131 contribute to the active site.

It belongs to the HisA/HisF family. As to quaternary structure, heterodimer of HisH and HisF.

The protein resides in the cytoplasm. The enzyme catalyses 5-[(5-phospho-1-deoxy-D-ribulos-1-ylimino)methylamino]-1-(5-phospho-beta-D-ribosyl)imidazole-4-carboxamide + L-glutamine = D-erythro-1-(imidazol-4-yl)glycerol 3-phosphate + 5-amino-1-(5-phospho-beta-D-ribosyl)imidazole-4-carboxamide + L-glutamate + H(+). It functions in the pathway amino-acid biosynthesis; L-histidine biosynthesis; L-histidine from 5-phospho-alpha-D-ribose 1-diphosphate: step 5/9. In terms of biological role, IGPS catalyzes the conversion of PRFAR and glutamine to IGP, AICAR and glutamate. The HisF subunit catalyzes the cyclization activity that produces IGP and AICAR from PRFAR using the ammonia provided by the HisH subunit. This is Imidazole glycerol phosphate synthase subunit HisF from Sinorhizobium medicae (strain WSM419) (Ensifer medicae).